The sequence spans 316 residues: 4-hydroxy-3-methylbut-2-enyl diphosphate reductase (316 aa).

Residue C12 participates in [4Fe-4S] cluster binding. The (2E)-4-hydroxy-3-methylbut-2-enyl diphosphate site is built by H41 and H74. Dimethylallyl diphosphate contacts are provided by H41 and H74. Isopentenyl diphosphate contacts are provided by H41 and H74. Residue C96 participates in [4Fe-4S] cluster binding. Residue H124 coordinates (2E)-4-hydroxy-3-methylbut-2-enyl diphosphate. H124 is a dimethylallyl diphosphate binding site. H124 contributes to the isopentenyl diphosphate binding site. E126 acts as the Proton donor in catalysis. T167 serves as a coordination point for (2E)-4-hydroxy-3-methylbut-2-enyl diphosphate. Residue C197 coordinates [4Fe-4S] cluster. S225, S226, N227, and S269 together coordinate (2E)-4-hydroxy-3-methylbut-2-enyl diphosphate. Dimethylallyl diphosphate-binding residues include S225, S226, N227, and S269. Isopentenyl diphosphate contacts are provided by S225, S226, N227, and S269.

The protein belongs to the IspH family. Homodimer. The cofactor is [4Fe-4S] cluster.

It catalyses the reaction isopentenyl diphosphate + 2 oxidized [2Fe-2S]-[ferredoxin] + H2O = (2E)-4-hydroxy-3-methylbut-2-enyl diphosphate + 2 reduced [2Fe-2S]-[ferredoxin] + 2 H(+). It carries out the reaction dimethylallyl diphosphate + 2 oxidized [2Fe-2S]-[ferredoxin] + H2O = (2E)-4-hydroxy-3-methylbut-2-enyl diphosphate + 2 reduced [2Fe-2S]-[ferredoxin] + 2 H(+). It participates in isoprenoid biosynthesis; dimethylallyl diphosphate biosynthesis; dimethylallyl diphosphate from (2E)-4-hydroxy-3-methylbutenyl diphosphate: step 1/1. It functions in the pathway isoprenoid biosynthesis; isopentenyl diphosphate biosynthesis via DXP pathway; isopentenyl diphosphate from 1-deoxy-D-xylulose 5-phosphate: step 6/6. Catalyzes the conversion of 1-hydroxy-2-methyl-2-(E)-butenyl 4-diphosphate (HMBPP) into a mixture of isopentenyl diphosphate (IPP) and dimethylallyl diphosphate (DMAPP). Acts in the terminal step of the DOXP/MEP pathway for isoprenoid precursor biosynthesis. The protein is 4-hydroxy-3-methylbut-2-enyl diphosphate reductase of Salmonella agona (strain SL483).